The primary structure comprises 132 residues: SH2 domain-containing protein 1B2 (132 aa).

In terms of domain architecture, SH2 spans 5-101 (YYHGCLTKRE…GMVVHLSNPI (97 aa)).

Interacts with SLAMF1 (phosphorylated). Interacts with CD244. Interacts with Src kinases HCK, LYN, FYN, FGR and LCK (via kinase domains). In terms of tissue distribution, expressed in spleen. Expressed in macrophages, CD8(+) T-Cells and NK cells. Conflictingly found only in NK cells.

It is found in the cytoplasm. Functionally, cytoplasmic adapter regulating receptors of the signaling lymphocytic activation molecule (SLAM) family. In SLAM signaling may cooperate with Sh2d1a/SAP. Plays a role in regulation of effector functions of natural killer (NK) cells by controlling signal transduction through Cd244/2b4. However, conflicting results are reported which may reflect the use of different strain backgrounds. Proposed to act as an inhibitor of Cd244-mediated NK cell function including cytotoxicity and IFN-gamma production, the latter found also by triggering Klra4 and Klrk1 next to Cd244. Seems to positively regulate Cd244- and Cd84-dependent NK cell functions implicating Cd244-mediated phosphorylation of Vav1. The protein is SH2 domain-containing protein 1B2 (Sh2d1b2) of Mus musculus (Mouse).